A 318-amino-acid chain; its full sequence is Biotin synthase (318 aa).

A Radical SAM core domain is found at 36–258 (HDPREVQLCT…VATTRILFPD (223 aa)). 3 residues coordinate [4Fe-4S] cluster: Cys54, Cys58, and Cys61. [2Fe-2S] cluster-binding residues include Cys98, Cys130, Cys190, and Arg262.

Belongs to the radical SAM superfamily. Biotin synthase family. Homodimer. [4Fe-4S] cluster serves as cofactor. It depends on [2Fe-2S] cluster as a cofactor.

It catalyses the reaction (4R,5S)-dethiobiotin + (sulfur carrier)-SH + 2 reduced [2Fe-2S]-[ferredoxin] + 2 S-adenosyl-L-methionine = (sulfur carrier)-H + biotin + 2 5'-deoxyadenosine + 2 L-methionine + 2 oxidized [2Fe-2S]-[ferredoxin]. It participates in cofactor biosynthesis; biotin biosynthesis; biotin from 7,8-diaminononanoate: step 2/2. Its function is as follows. Catalyzes the conversion of dethiobiotin (DTB) to biotin by the insertion of a sulfur atom into dethiobiotin via a radical-based mechanism. The protein is Biotin synthase of Gloeobacter violaceus (strain ATCC 29082 / PCC 7421).